We begin with the raw amino-acid sequence, 182 residues long: Small ribosomal subunit protein uS5 (182 aa).

The region spanning 16–79 is the S5 DRBM domain; the sequence is FVDRLVHINR…EAAKRGMIYV (64 aa).

It belongs to the universal ribosomal protein uS5 family. Part of the 30S ribosomal subunit. Contacts proteins S4 and S8.

In terms of biological role, with S4 and S12 plays an important role in translational accuracy. Its function is as follows. Located at the back of the 30S subunit body where it stabilizes the conformation of the head with respect to the body. In Bartonella quintana (strain Toulouse) (Rochalimaea quintana), this protein is Small ribosomal subunit protein uS5.